A 43-amino-acid chain; its full sequence is Augerpeptide hhe9.2 (43 aa).

Residues 2–40 (EEVGCFPNVCKNDGNCSIETSTGMTRCQCLEGYTGHVCE) enclose the EGF-like domain. 3 disulfide bridges follow: Cys-6–Cys-28, Cys-11–Cys-30, and Cys-17–Cys-39.

As to expression, expressed by the venom duct.

The protein localises to the secreted. This Hastula hectica (Sea snail) protein is Augerpeptide hhe9.2.